A 449-amino-acid chain; its full sequence is Chromogranin-A (449 aa).

Residues 1–18 form the signal peptide; that stretch reads MRSAAVLALLLCAGQVIA. A disulfide bridge links C35 with C56. The segment at 87–431 is disordered; that stretch reads AKERTHQQKK…EDQELESLSA (345 aa). Residue S99 is modified to Phosphoserine. The segment covering 107-140 has biased composition (basic and acidic residues); sequence VLEKPNDQAEPKEVTEEVSSKDAAEKRDDFKEVE. Residue S142 is modified to Phosphoserine. O-linked (GalNAc...) serine glycosylation occurs at S185. Y191 is subject to Phosphotyrosine. S200 carries the post-translational modification Phosphoserine. A glycan (O-linked (GalNAc...) serine) is linked at S204. Phosphoserine is present on S215. A compositionally biased stretch (basic and acidic residues) spans 233–242; it reads EAEAREKAVP. A glycan (O-linked (GalNAc...) threonine) is linked at T249. Over residues 279–297 the composition is skewed to basic and acidic residues; that stretch reads GAEEAKPPEGKGEWAHSRQ. Residue S295 is modified to Phosphoserine. At G312 the chain carries Glycine amide. Phosphoserine is present on residues S315, S325, and S363. Basic and acidic residues predominate over residues 323 to 351; it reads QLSKEWEDAKRWSKMDQLAKELTAEKRLE. At M364 the chain carries Methionine sulfoxide. Phosphoserine occurs at positions 390, 394, 416, and 430. Over residues 406–423 the composition is skewed to basic and acidic residues; sequence YPEEKKEEEGSANRRPED. Residue S416 is glycosylated (O-linked (Xyl...) (chondroitin sulfate) serine).

Belongs to the chromogranin/secretogranin protein family. In terms of assembly, self-interacts; self-assembly is promoted in vitro by chondroitin sulfate attachment which occurs at mildly acidic pH conditions. Interacts with SCG3. Interacts with ITPR1 in the secretory granules. Post-translationally, in secretory granules, is attacked at both N- and C-terminal sides by proteolytic enzymes generating numerous peptides of various activities. Proteolytic processing can give rise to additional longer forms of catestatin peptides which display a less potent catecholamine release-inhibitory activity. O-glycosylated; contains chondroitin sulfate (CS). CS attachment is pH-dependent, being observed at mildly acidic conditions of pH 5 but not at neutral pH, and promotes self-assembly in vitro. As to expression, highest concentration of GE-25 found in adrenal medulla with lower levels present in the pituitary, the intestinal mucosa and the pancreas. Also found in the brain.

It localises to the secreted. Its subcellular location is the cytoplasmic vesicle. The protein resides in the secretory vesicle. The protein localises to the neuronal dense core vesicle. In terms of biological role, strongly inhibits glucose induced insulin release from the pancreas. Completely inhibits catecholamine release from chromaffin cells. Functionally, has antibacterial activity against M.luteus. Not active against E.coli. Its function is as follows. Inhibits catecholamine release from chromaffin cells and noradrenergic neurons by acting as a non-competitive nicotinic cholinergic antagonist. Displays antibacterial activity against Gram-positive bacteria M.luteus and B.megaterium, and Gram-negative bacteria E.coli, and antifungal activity against a variety of filamentous fungi including A.fumigatus, N.hematococca, F.culmorum, F.oxyporum, T.mentagrophytes and several forms of Candida: C.albicans, C.tropicalis, C.glabrata and C.neoform. Can induce mast cell migration, degranulation and production of cytokines and chemokines. In terms of biological role, has antibacterial activity against Gram-positive bacteria M.luteus, B.megaterium. Not active against Gram-positive bacteria B.cereus, B.subtilis, S.pyogenes, M.fortuitum, S.aureus and L.monocytogenes and against Gram-negative bacteria E.coli, E.cloacae, S.typhimurium, K.pneumoniae and P.aeruginosa. Possesses antifungal activity against N.crassa, A.fumigatus, A.brassicicola, N.hematococca, F.culmorum and F.oxyporum and against the yeast S.cerevisiae and C.albicans. Inactive against A.benhamiae. Has antifungal activity against N.crassa, A.fumigatus, A.brassicicola, N.hematococca, F.culmorum, F.oxyporum, A.benhamiae, C.neoformans, as well as against yeasts C.albicans, and C.tropicalis. Seems to be inactive against C.glabrata. Interacts with the fungal cell wall, crosses the plasma membrane and accumulates in fungal cells where it inhibits calcineurin activity. Functionally, regulates granule biogenesis in endocrine cells by up-regulating the transcription of protease nexin 1 (SERPINE2) via a cAMP-PKA-SP1 pathway. This leads to inhibition of granule protein degradation in the Golgi complex which in turn promotes granule formation. This chain is Chromogranin-A (CHGA), found in Bos taurus (Bovine).